A 1104-amino-acid polypeptide reads, in one-letter code: Nitrite reductase [NAD(P)H] (1104 aa).

Residue 44–79 (QKIVVVGLGMVAVAFIEKLVKLDSERRKYDIVVIGE) coordinates FAD. 146 to 176 (YDILVLATGSDAVLPTSTPGHDAKGIFVYRT) is a binding site for NAD(+). Positions 396-419 (KFLPGQRPSAESIGAADPNREEEP) are disordered. Residues C500, C502, C535, and C538 each contribute to the [2Fe-2S] cluster site. Positions 720, 726, 760, and 764 each coordinate [4Fe-4S] cluster. C764 contacts siroheme. Residues 932–1040 (WQPVIKADYF…VEEREDGWIY (109 aa)) form the Rieske domain. Positions 976, 978, 1001, and 1004 each coordinate [2Fe-2S] cluster. Residues 1081–1104 (GKRAGAKGIEGSKPTRSPSNTIDW) are disordered. Residues 1094–1104 (PTRSPSNTIDW) show a composition bias toward polar residues.

It belongs to the nitrite and sulfite reductase 4Fe-4S domain family. In terms of assembly, homodimer. Siroheme is required as a cofactor. [4Fe-4S] cluster serves as cofactor. Requires FAD as cofactor. The cofactor is [2Fe-2S] cluster.

The enzyme catalyses NH4(+) + 3 NADP(+) + 2 H2O = nitrite + 3 NADPH + 5 H(+). It carries out the reaction NH4(+) + 3 NAD(+) + 2 H2O = nitrite + 3 NADH + 5 H(+). The protein operates within nitrogen metabolism; nitrate reduction (assimilation). This chain is Nitrite reductase [NAD(P)H] (niiA), found in Emericella nidulans (strain FGSC A4 / ATCC 38163 / CBS 112.46 / NRRL 194 / M139) (Aspergillus nidulans).